The chain runs to 103 residues: Large ribosomal subunit protein uL24 (103 aa).

It belongs to the universal ribosomal protein uL24 family. As to quaternary structure, part of the 50S ribosomal subunit.

In terms of biological role, one of two assembly initiator proteins, it binds directly to the 5'-end of the 23S rRNA, where it nucleates assembly of the 50S subunit. Its function is as follows. One of the proteins that surrounds the polypeptide exit tunnel on the outside of the subunit. The sequence is that of Large ribosomal subunit protein uL24 from Christiangramia forsetii (strain DSM 17595 / CGMCC 1.15422 / KT0803) (Gramella forsetii).